The sequence spans 195 residues: Adenylate kinase (195 aa).

ATP is bound at residue glycine 11–threonine 16. Residues serine 31–valine 60 are NMP. Residues threonine 32, arginine 37, arginine 58–valine 60, glycine 86–arginine 89, and glutamine 93 each bind AMP. The interval leucine 127–aspartate 137 is LID. Residue arginine 128 coordinates ATP. AMP-binding residues include arginine 134 and arginine 145. Glutamine 173 serves as a coordination point for ATP.

This sequence belongs to the adenylate kinase family. In terms of assembly, monomer.

Its subcellular location is the cytoplasm. The catalysed reaction is AMP + ATP = 2 ADP. It functions in the pathway purine metabolism; AMP biosynthesis via salvage pathway; AMP from ADP: step 1/1. In terms of biological role, catalyzes the reversible transfer of the terminal phosphate group between ATP and AMP. Plays an important role in cellular energy homeostasis and in adenine nucleotide metabolism. The protein is Adenylate kinase of Cyanothece sp. (strain PCC 7425 / ATCC 29141).